The sequence spans 772 residues: UDP-N-acetylmuramoyl-L-alanyl-D-glutamate--2,6-diaminopimelate ligase MurE homolog, chloroplastic (772 aa).

A chloroplast-targeting transit peptide spans 1–40; sequence MAFTFLSPHPVFLSLTGTTSSFSYKPVLLPFSRNSRTLTV. Disordered regions lie at residues 42–87 and 141–168; these read AGPA…KLEE and LLKP…DVTD. 2 stretches are compositionally biased toward acidic residues: residues 54 to 63 and 158 to 168; these read ADDDPPEAPE and EGNEEEGDVTD. Ser-194 is modified (phosphoserine).

The protein belongs to the MurCDEF family. MurE subfamily. As to quaternary structure, component of the plastid-encoded plastid RNA polymerase (PEP) complex. In terms of tissue distribution, expressed in leaves and flowers.

The protein resides in the plastid. It localises to the chloroplast. In terms of biological role, involved in chloroplast biogenesis. Required for thylakoid membrane development. Seems to be required for plastid-encoded plastid RNA polymerase (PEP)-dependent gene expression. This chain is UDP-N-acetylmuramoyl-L-alanyl-D-glutamate--2,6-diaminopimelate ligase MurE homolog, chloroplastic, found in Arabidopsis thaliana (Mouse-ear cress).